We begin with the raw amino-acid sequence, 593 residues long: Isocitrate dehydrogenase kinase/phosphatase (593 aa).

Residues 315-321 (APGIRGM) and Lys-336 each bind ATP. The active site involves Asp-371.

It belongs to the AceK family.

It localises to the cytoplasm. The catalysed reaction is L-seryl-[isocitrate dehydrogenase] + ATP = O-phospho-L-seryl-[isocitrate dehydrogenase] + ADP + H(+). In terms of biological role, bifunctional enzyme which can phosphorylate or dephosphorylate isocitrate dehydrogenase (IDH) on a specific serine residue. This is a regulatory mechanism which enables bacteria to bypass the Krebs cycle via the glyoxylate shunt in response to the source of carbon. When bacteria are grown on glucose, IDH is fully active and unphosphorylated, but when grown on acetate or ethanol, the activity of IDH declines drastically concomitant with its phosphorylation. The polypeptide is Isocitrate dehydrogenase kinase/phosphatase (Salmonella typhi).